Here is a 252-residue protein sequence, read N- to C-terminus: MSPLIKLAASSRLHDATHYVLCPFAGGGSGAFRHWRTLSLENEVISVMLYPGREFRIDDPTVINIGTLAEEMIQALKTCNQRIEDTIIVGHSMGAQVAYEASKKLVNQGLFLKGLIISGCQAPHIKGRRLLGECDDKTFIHNLVEIGGCDPSLAKSPEWWPIFLPALRADFTATEQYIFTSLPNDKEGLPIPTLLISGDQDREANFSEIEEWKLWCNKVVDHLVVEGGHFYITEQPQMMLECIRALSTETTA.

Catalysis depends on residues serine 92 and histidine 229.

The protein belongs to the thioesterase family.

Its pathway is siderophore biosynthesis; anguibactin biosynthesis. Functionally, probable thioesterase. Involved in anguibactin production, but is not essential for virulence or iron transport gene expression. This chain is Probable anguibactin biosynthesis thioesterase AngT (angT), found in Vibrio anguillarum (strain ATCC 68554 / 775) (Listonella anguillarum).